A 276-amino-acid polypeptide reads, in one-letter code: Formamidopyrimidine-DNA glycosylase (276 aa).

Catalysis depends on Pro2, which acts as the Schiff-base intermediate with DNA. Glu3 serves as the catalytic Proton donor. Lys58 serves as the catalytic Proton donor; for beta-elimination activity. 3 residues coordinate DNA: His94, Arg112, and Arg157. The segment at 242–276 (FVYDRAGQPCRVCGTPIKQIVQGQRSTYYCPTCQR) adopts an FPG-type zinc-finger fold. Arg266 serves as the catalytic Proton donor; for delta-elimination activity.

The protein belongs to the FPG family. In terms of assembly, monomer. Requires Zn(2+) as cofactor.

It carries out the reaction Hydrolysis of DNA containing ring-opened 7-methylguanine residues, releasing 2,6-diamino-4-hydroxy-5-(N-methyl)formamidopyrimidine.. The catalysed reaction is 2'-deoxyribonucleotide-(2'-deoxyribose 5'-phosphate)-2'-deoxyribonucleotide-DNA = a 3'-end 2'-deoxyribonucleotide-(2,3-dehydro-2,3-deoxyribose 5'-phosphate)-DNA + a 5'-end 5'-phospho-2'-deoxyribonucleoside-DNA + H(+). Involved in base excision repair of DNA damaged by oxidation or by mutagenic agents. Acts as a DNA glycosylase that recognizes and removes damaged bases. Has a preference for oxidized purines, such as 7,8-dihydro-8-oxoguanine (8-oxoG). Has AP (apurinic/apyrimidinic) lyase activity and introduces nicks in the DNA strand. Cleaves the DNA backbone by beta-delta elimination to generate a single-strand break at the site of the removed base with both 3'- and 5'-phosphates. This chain is Formamidopyrimidine-DNA glycosylase, found in Paraburkholderia phymatum (strain DSM 17167 / CIP 108236 / LMG 21445 / STM815) (Burkholderia phymatum).